The primary structure comprises 597 residues: Plasmepsin V (597 aa).

The Lumenal portion of the chain corresponds to 1 to 551 (MNNYFLRKEN…EKENIFLKVS (551 aa)). A coiled-coil region spans residues 33–88 (CNNVENKIDNVGKKIENVGKKIGDMENKNDNVENKNDNVENKNDNVGNKNDNVKNA). The segment covering 58–75 (ENKNDNVENKNDNVENKN) has biased composition (basic and acidic residues). The segment at 58 to 83 (ENKNDNVENKNDNVENKNDNVGNKND) is disordered. A Peptidase A1 domain is found at 107–521 (YFLDIDIGKP…DLQQNQIAFI (415 aa)). Residue aspartate 125 is part of the active site. 7 disulfides stabilise this stretch: cysteine 135/cysteine 218, cysteine 138/cysteine 141, cysteine 162/cysteine 173, cysteine 167/cysteine 178, cysteine 266/cysteine 525, cysteine 396/cysteine 441, and cysteine 450/cysteine 486. The span at 289 to 298 (KEKQKMDKSD) shows a compositional bias: basic and acidic residues. Positions 289–323 (KEKQKMDKSDNNSSNKGNVSIKLKNNDKNDDEENN) are disordered. The segment covering 299 to 311 (NNSSNKGNVSIKL) has biased composition (low complexity). Residue aspartate 372 is part of the active site. Residues 552-572 (YINLYCLWLLLALTILLSLIL) form a helical membrane-spanning segment. Topologically, residues 573 to 597 (YVRKMFYMDYFPLSDQNKSPIQEST) are cytoplasmic.

Belongs to the peptidase A1 family. In terms of assembly, component of a complex composed of SPC25 and PMV; the interaction is mediated via the transmembrane domains. The complex interacts with the SEC61 channel-forming translocon complex and is involved in the recognition and import of PEXEL motif-containing proteins into the ER for subsequent export. In terms of processing, it is not clear if the zymogen has a cleavable propeptide. In vitro, appears to be cleaved between Asn-87 and Ala-88. Cleavage of the putative propeptide is dispensable for catalytic activity.

The protein localises to the endoplasmic reticulum membrane. During the asexual blood stage, plays an essential role in the export of several proteins into the host erythrocytes by cleaving the pentameric localization motif RxLxE/Q/D (termed Plasmodium export element (PEXEL)) located downstream of the N-terminal secretory signal sequence. Specifically, cleaves after the leucine residue in the RxLxE/Q/D (or RxLxxE) motif of exported proteins including RESA, EMP2, EMP3, KAHRP, RIF/Rifin and STEVOR. Also, by regulating protein export, plays an essential role in gametocyte development and thus parasite transmission to the mosquito vector. The chain is Plasmepsin V from Plasmodium falciparum (isolate HB3).